We begin with the raw amino-acid sequence, 61 residues long: Small ribosomal subunit protein uS14B (61 aa).

Residues Cys-24, Cys-27, Cys-40, and Cys-43 each contribute to the Zn(2+) site.

Belongs to the universal ribosomal protein uS14 family. Zinc-binding uS14 subfamily. In terms of assembly, part of the 30S ribosomal subunit. Contacts proteins S3 and S10. Zn(2+) is required as a cofactor.

Functionally, binds 16S rRNA, required for the assembly of 30S particles and may also be responsible for determining the conformation of the 16S rRNA at the A site. The chain is Small ribosomal subunit protein uS14B from Mycolicibacterium smegmatis (strain ATCC 700084 / mc(2)155) (Mycobacterium smegmatis).